A 326-amino-acid chain; its full sequence is Intracellular serine protease (326 aa).

Positions 23-303 (PRGVEMIQAP…NGLLYLTAVE (281 aa)) constitute a Peptidase S8 domain. Active-site charge relay system residues include D49, H86, and S244.

The protein belongs to the peptidase S8 family.

Its function is as follows. Involved in the generation of beta- and alpha-amylases from the large amylase precursor. This Paenibacillus polymyxa (Bacillus polymyxa) protein is Intracellular serine protease (isp).